Here is a 424-residue protein sequence, read N- to C-terminus: Acetyl-CoA acetyltransferase, mitochondrial (424 aa).

The transit peptide at 1–30 (MAALVALHGVVRRPLLRGLLQEVRCLERSY) directs the protein to the mitochondrion. An N6-acetyllysine; alternate modification is found at Lys63. Lys63 carries the post-translational modification N6-succinyllysine; alternate. Lys75 is modified (N6-succinyllysine). Cys123 serves as the catalytic Acyl-thioester intermediate. 4 positions are modified to N6-acetyllysine; alternate: Lys171, Lys178, Lys187, and Lys199. N6-succinyllysine; alternate is present on residues Lys171, Lys178, Lys187, and Lys199. A Phosphoserine modification is found at Ser204. Residue Tyr216 participates in CoA binding. Tyr216 lines the K(+) pocket. An N6-acetyllysine; alternate mark is found at Lys220 and Lys227. Lys220 and Lys227 each carry N6-succinyllysine; alternate. Lys240 is subject to N6-succinyllysine. Position 242 is an N6-acetyllysine; alternate (Lys242). N6-succinyllysine; alternate is present on Lys242. 2 positions are modified to N6-acetyllysine: Lys248 and Lys254. CoA contacts are provided by residues 255–257 (RVD) and Lys260. Lys260 is modified (N6-acetyllysine; alternate). Lys260 bears the N6-succinyllysine; alternate mark. N6-succinyllysine is present on residues Lys263 and Lys265. The residue at position 270 (Lys270) is an N6-acetyllysine. Positions 277, 278, and 280 each coordinate K(+). A CoA-binding site is contributed by Ser281. An N6-acetyllysine modification is found at Lys335. Residue Val378 coordinates K(+). The active-site Proton donor/acceptor is Cys410.

Belongs to the thiolase-like superfamily. Thiolase family. In terms of assembly, homotetramer. In terms of processing, succinylation at Lys-265, adjacent to a coenzyme A binding site. Desuccinylated by SIRT5.

Its subcellular location is the mitochondrion. It catalyses the reaction 2 acetyl-CoA = acetoacetyl-CoA + CoA. It carries out the reaction propanoyl-CoA + acetyl-CoA = 2-methyl-3-oxobutanoyl-CoA + CoA. The protein operates within lipid metabolism; fatty acid beta-oxidation. Its activity is regulated as follows. Activated by potassium ions, but not sodium ions. Its function is as follows. This is one of the enzymes that catalyzes the last step of the mitochondrial beta-oxidation pathway, an aerobic process breaking down fatty acids into acetyl-CoA. Using free coenzyme A/CoA, catalyzes the thiolytic cleavage of medium- to long-chain 3-oxoacyl-CoAs into acetyl-CoA and a fatty acyl-CoA shortened by two carbon atoms. The activity of the enzyme is reversible and it can also catalyze the condensation of two acetyl-CoA molecules into acetoacetyl-CoA. Thereby, it plays a major role in ketone body metabolism. This Mus musculus (Mouse) protein is Acetyl-CoA acetyltransferase, mitochondrial (Acat1).